A 259-amino-acid polypeptide reads, in one-letter code: 4-hydroxy-tetrahydrodipicolinate reductase (259 aa).

Residues 8 to 13 (GFKGRM), 93 to 95 (GTT), and 119 to 122 (APNF) each bind NAD(+). His149 functions as the Proton donor/acceptor in the catalytic mechanism. (S)-2,3,4,5-tetrahydrodipicolinate is bound at residue His150. The active-site Proton donor is the Lys153. Residue 159-160 (GT) coordinates (S)-2,3,4,5-tetrahydrodipicolinate.

It belongs to the DapB family.

The protein localises to the cytoplasm. The catalysed reaction is (S)-2,3,4,5-tetrahydrodipicolinate + NAD(+) + H2O = (2S,4S)-4-hydroxy-2,3,4,5-tetrahydrodipicolinate + NADH + H(+). It carries out the reaction (S)-2,3,4,5-tetrahydrodipicolinate + NADP(+) + H2O = (2S,4S)-4-hydroxy-2,3,4,5-tetrahydrodipicolinate + NADPH + H(+). It participates in amino-acid biosynthesis; L-lysine biosynthesis via DAP pathway; (S)-tetrahydrodipicolinate from L-aspartate: step 4/4. In terms of biological role, catalyzes the conversion of 4-hydroxy-tetrahydrodipicolinate (HTPA) to tetrahydrodipicolinate. The sequence is that of 4-hydroxy-tetrahydrodipicolinate reductase from Enterococcus faecalis (strain ATCC 700802 / V583).